The primary structure comprises 356 residues: Protein RecA (356 aa).

Residue 68–75 (GQESSGKT) participates in ATP binding.

Belongs to the RecA family.

Its subcellular location is the cytoplasm. Can catalyze the hydrolysis of ATP in the presence of single-stranded DNA, the ATP-dependent uptake of single-stranded DNA by duplex DNA, and the ATP-dependent hybridization of homologous single-stranded DNAs. It interacts with LexA causing its activation and leading to its autocatalytic cleavage. This chain is Protein RecA, found in Thermotoga sp. (strain RQ2).